Reading from the N-terminus, the 132-residue chain is Transcription antitermination protein NusB (132 aa).

Belongs to the NusB family.

Its function is as follows. Involved in transcription antitermination. Required for transcription of ribosomal RNA (rRNA) genes. Binds specifically to the boxA antiterminator sequence of the ribosomal RNA (rrn) operons. The sequence is that of Transcription antitermination protein NusB from Campylobacter jejuni subsp. doylei (strain ATCC BAA-1458 / RM4099 / 269.97).